Reading from the N-terminus, the 77-residue chain is Sec-independent protein translocase protein TatA (77 aa).

The chain crosses the membrane as a helical span at residues 1-21; that stretch reads MGGLSIWHWLIVLLIVALVFG. Residues 40–77 form a disordered region; sequence KDGMREGEAPADPQQLPRSGSVNVDAKDATRSSDSNKA. The span at 64–77 shows a compositional bias: basic and acidic residues; it reads DAKDATRSSDSNKA.

Belongs to the TatA/E family. In terms of assembly, the Tat system comprises two distinct complexes: a TatABC complex, containing multiple copies of TatA, TatB and TatC subunits, and a separate TatA complex, containing only TatA subunits. Substrates initially bind to the TatABC complex, which probably triggers association of the separate TatA complex to form the active translocon.

The protein resides in the cell inner membrane. In terms of biological role, part of the twin-arginine translocation (Tat) system that transports large folded proteins containing a characteristic twin-arginine motif in their signal peptide across membranes. TatA could form the protein-conducting channel of the Tat system. The polypeptide is Sec-independent protein translocase protein TatA (Burkholderia thailandensis (strain ATCC 700388 / DSM 13276 / CCUG 48851 / CIP 106301 / E264)).